Reading from the N-terminus, the 681-residue chain is Ribosomal L1 domain-containing protein CG13096 (681 aa).

Disordered stretches follow at residues 1–248 (MVKV…AKSK) and 579–681 (DAAP…DDEE). Phosphoserine is present on residues Ser15 and Ser17. A compositionally biased stretch (basic and acidic residues) spans 54-74 (VKKDAIKKEPEVSKKGAEKKQ). Ser89 is subject to Phosphoserine. Over residues 103-112 (KPAASGAPVG) the composition is skewed to low complexity. Ser128 carries the phosphoserine modification. Residues 189–217 (QAAPAKPAKAQPASQLQKKAKAVQKLSKP) are compositionally biased toward low complexity. The span at 599–610 (KESSSEGAKADA) shows a compositional bias: basic and acidic residues. Residues 611–681 (ESDEEEEVEE…EDDDDDDDEE (71 aa)) show a composition bias toward acidic residues.

This sequence belongs to the universal ribosomal protein uL1 family. Highly divergent.

This chain is Ribosomal L1 domain-containing protein CG13096, found in Drosophila melanogaster (Fruit fly).